A 479-amino-acid polypeptide reads, in one-letter code: Endosomal/lysosomal proton channel TMEM175 (479 aa).

Residues 1–26 form a disordered region; that stretch reads MSGPQAPEPTLEGQADASAGSPDEDA. The Cytoplasmic portion of the chain corresponds to 1–33; the sequence is MSGPQAPEPTLEGQADASAGSPDEDAAEGIQHS. The chain crosses the membrane as a helical span at residues 34 to 56; the sequence is HRMLSFSDALLSIIATVMEFDKS. Residues 35 to 41 carry the RxxxFSD motif 1 motif; the sequence is RMLSFSD. Residues 52–58 form a short helix H2-1 region; sequence EFDKSVQ. Residues 57-64 are Lumenal-facing; sequence VQRLLATR. Residues 65–87 form a helical membrane-spanning segment; the sequence is IAVYLMTFLIVTVAWAAHTRLFQ. Residues 88 to 93 lie on the Cytoplasmic side of the membrane; that stretch reads VVGKID. A helical membrane pass occupies residues 94–103; the sequence is DTLALLNLFS. At 104–113 the chain is on the lumenal side; the sequence is LMVTFPEVPL. The helical transmembrane segment at 114–135 threads the bilayer; sequence GIFLFCMCVIAIGAVQALIVLY. Topologically, residues 136 to 159 are cytoplasmic; sequence AFHFPHLLSPQIERSAHRGLYRQR. Residues 160-180 traverse the membrane as a helical segment; the sequence is VLGIIVRGPALCLAAAGFSLF. Residues 181–185 lie on the Lumenal side of the membrane; the sequence is FYPAS. Residues 186 to 205 traverse the membrane as a helical segment; that stretch reads YLLMAMVIVLPHVSKAAGWC. Residues 206–232 are Cytoplasmic-facing; the sequence is RAQLVGPREPPAHSVEVFTFDLHEPLS. Residues 233–257 traverse the membrane as a helical segment; that stretch reads KERVEAFSDGVYAIVATLLILDICE. The RxxxFSD motif 2 signature appears at 235-241; sequence RVEAFSD. The Lumenal portion of the chain corresponds to 258 to 284; the sequence is DNVPDAKDVKEKFQGSLVAALGESGPH. The interval 263-271 is short helix H1-2; the sequence is AKDVKEKFQ. The interval 273-279 is short helix H2-2; sequence SLVAALG. The chain crosses the membrane as a helical span at residues 285–307; it reads FLAYFGSFATVGLLWFAHHSLFL. The Cytoplasmic segment spans residues 308-313; the sequence is HIRRAT. A helical transmembrane segment spans residues 314-335; the sequence is QPMGLLNTLSLAFVGGLPLAYQ. Over 336-350 the chain is Lumenal; the sequence is QTSAFTKQPRDELES. The helical transmembrane segment at 351–371 threads the bilayer; sequence VRISCAIIFLASIFQFAIWTT. Topologically, residues 372–391 are cytoplasmic; the sequence is ALLQEGETLQPSARFGGREH. A helical membrane pass occupies residues 392 to 415; the sequence is AFMFAKLALYPCASLLAFACTCVL. Over 416 to 417 the chain is Lumenal; it reads SS. The chain crosses the membrane as a helical span at residues 418–444; the sequence is FSTAIFHAMQIAVPFAFLLLRLLVRLA. The Cytoplasmic segment spans residues 445-479; that stretch reads LAGLRALRGLVGPVLARPAPGAADEAQSPLLPAPC.

The protein belongs to the TMEM175 family. In terms of assembly, homodimer. Interacts with AKT (AKT1, AKT2 or AKT3); leading to formation of the lysoK(GF) complex, which activates the channel. Interacts with LAMP1; inhibiting the proton channel activity of TMEM175. Interacts with LAMP2; inhibiting the proton channel activity of TMEM175.

The protein resides in the endosome membrane. It is found in the lysosome membrane. It carries out the reaction H(+)(in) = H(+)(out). The catalysed reaction is K(+)(in) = K(+)(out). Its activity is regulated as follows. Active at low pH (under pH 4.6): proton channel activity is activated by luminal side protons. Polyunsaturated fatty acids, such as arachidonic acid, also activate the channel activity. Proton channel activity is directly inhibited by LAMP1 or LAMP2, facilitating lysosomal acidification. Channel activity is activated following interaction with AKT (AKT1, AKT2 or AKT3): interaction promotes activation from closed to an open state. Activation by AKT is independent of AKT serine/threonine-protein kinase activity. In terms of biological role, proton-activated proton channel that catalyzes proton efflux from endosomes and lysosomes to maintain a steady-state pH. Activated at low pH (under pH 4.6) by luminal side protons: selectively mediates lysosomal proton release from lysosomes, eliciting a proton leak that balances V-ATPase activity to maintain pH homeostasis. Regulation of lumenal pH stability is required for autophagosome-lysosome fusion. Also acts as a potassium channel at higher pH, regulating potassium conductance in endosomes and lysosomes. Constitutes the pore-forming subunit of the lysoK(GF) complex, a complex activated by extracellular growth factors. The lysoK(GF) complex is composed of TMEM175 and AKT (AKT1, AKT2 or AKT3), a major target of growth factor receptors: in the complex, TMEM175 channel is opened by conformational changes by AKT, leading to its activation. The lysoK(GF) complex is required to protect neurons against stress-induced damage. The sequence is that of Endosomal/lysosomal proton channel TMEM175 from Bos taurus (Bovine).